Consider the following 436-residue polypeptide: Lactonohydrolase oryL (436 aa).

The N-terminal stretch at 1 to 27 (MLSYTSHCLQALLGVASLPYRQYQAYS) is a signal peptide.

Belongs to the SMP-30/CGR1 family.

It functions in the pathway secondary metabolite biosynthesis. In terms of biological role, lactonohydrolase; part of the gene cluster that mediates the biosynthesis of oryzines, natural products with an unusual maleidride backbone. The two subunits of the fungal fatty acid synthase oryfasA and oryfasB probably form octenoic acid. This fatty acid is most likely activated by the acyl-CoA ligase oryP to give octenyl-CoA before the citrate synthase-like protein oryE catalyzes condensation with oxaloacetate to form tricarboxylic acid. The next steps of the pathways are conjectural, but a favorite possible route has been proposed, beginning with decarboxylation and concomitant dehydration by the decarboxylase oryM, followed by tautomerization, which may lead to the production of a diene intermediate. Reduction of this diene intermediate could give the known metabolite piliformic acid. On the pathway to oryzine B and oryzine A, however, hydroxylation of the diene by the alpha-ketoglutarate-dependent dioxygenase oryG and lactonisation by the lactonohydrolases oryH or oryL could give oryzine B directly. Finally, enoyl reduction by the dehydrogenase oryD would then convert oryzine B into oryzine A. The polypeptide is Lactonohydrolase oryL (Aspergillus oryzae (strain ATCC 42149 / RIB 40) (Yellow koji mold)).